The primary structure comprises 410 residues: Cysteine desulfurase IscS (410 aa).

Pyridoxal 5'-phosphate is bound by residues 80 to 81 (AT), asparagine 160, glutamine 188, and 208 to 210 (SGH). Lysine 211 carries the post-translational modification N6-(pyridoxal phosphate)lysine. Threonine 248 is a binding site for pyridoxal 5'-phosphate. The active-site Cysteine persulfide intermediate is cysteine 334. Cysteine 334 provides a ligand contact to [2Fe-2S] cluster.

This sequence belongs to the class-V pyridoxal-phosphate-dependent aminotransferase family. NifS/IscS subfamily. In terms of assembly, homodimer. Forms a heterotetramer with IscU, interacts with other sulfur acceptors. Pyridoxal 5'-phosphate serves as cofactor.

Its subcellular location is the cytoplasm. It catalyses the reaction (sulfur carrier)-H + L-cysteine = (sulfur carrier)-SH + L-alanine. It participates in cofactor biosynthesis; iron-sulfur cluster biosynthesis. Its function is as follows. Master enzyme that delivers sulfur to a number of partners involved in Fe-S cluster assembly, tRNA modification or cofactor biosynthesis. Catalyzes the removal of elemental sulfur atoms from cysteine to produce alanine. Functions as a sulfur delivery protein for Fe-S cluster synthesis onto IscU, an Fe-S scaffold assembly protein, as well as other S acceptor proteins. The protein is Cysteine desulfurase IscS of Rickettsia akari (strain Hartford).